Reading from the N-terminus, the 331-residue chain is 3-dehydroquinate synthase homolog (331 aa).

The protein belongs to the archaeal-type DHQ synthase family.

The sequence is that of 3-dehydroquinate synthase homolog from Aquifex aeolicus (strain VF5).